A 355-amino-acid polypeptide reads, in one-letter code: Protein RecA (355 aa).

67-74 contacts ATP; the sequence is GPESSGKT. The disordered stretch occupies residues 335 to 355; it reads NSLVSDVESEDEGASESNEEF. The segment covering 341–355 has biased composition (acidic residues); sequence VESEDEGASESNEEF.

The protein belongs to the RecA family.

It localises to the cytoplasm. Functionally, can catalyze the hydrolysis of ATP in the presence of single-stranded DNA, the ATP-dependent uptake of single-stranded DNA by duplex DNA, and the ATP-dependent hybridization of homologous single-stranded DNAs. It interacts with LexA causing its activation and leading to its autocatalytic cleavage. In Sodalis glossinidius, this protein is Protein RecA.